A 155-amino-acid polypeptide reads, in one-letter code: uncharacterized protein (155 aa).

The first 30 residues, 1–30 (MTYNTNTSLSSYAGLSAFALSVFCILWGTA), serve as a signal peptide directing secretion.

This is an uncharacterized protein from Treponema pallidum (strain Nichols).